The chain runs to 222 residues: Large ribosomal subunit protein uL1 (222 aa).

This sequence belongs to the universal ribosomal protein uL1 family. Part of the 50S ribosomal subunit.

In terms of biological role, binds directly to 23S rRNA. Probably involved in E site tRNA release. Protein L1 is also a translational repressor protein, it controls the translation of its operon by binding to its mRNA. This Pyrobaculum arsenaticum (strain DSM 13514 / JCM 11321 / PZ6) protein is Large ribosomal subunit protein uL1.